A 206-amino-acid polypeptide reads, in one-letter code: 2,3-bisphosphoglycerate-dependent phosphoglycerate mutase (206 aa).

Substrate contacts are provided by residues arginine 9–asparagine 16, threonine 22–glycine 23, arginine 61, glutamate 88–tyrosine 91, lysine 99, arginine 115–arginine 116, and glycine 159–asparagine 160. Histidine 10 functions as the Tele-phosphohistidine intermediate in the catalytic mechanism. Catalysis depends on glutamate 88, which acts as the Proton donor/acceptor.

This sequence belongs to the phosphoglycerate mutase family. BPG-dependent PGAM subfamily. As to quaternary structure, homodimer.

The catalysed reaction is (2R)-2-phosphoglycerate = (2R)-3-phosphoglycerate. It functions in the pathway carbohydrate degradation; glycolysis; pyruvate from D-glyceraldehyde 3-phosphate: step 3/5. Its function is as follows. Catalyzes the interconversion of 2-phosphoglycerate and 3-phosphoglycerate. The polypeptide is 2,3-bisphosphoglycerate-dependent phosphoglycerate mutase (Brucella abortus (strain S19)).